The sequence spans 236 residues: Small ribosomal subunit protein uS3c (236 aa).

The KH type-2 domain maps to 47–127 (VRKYVRSSSR…KLNMTLSQVA (81 aa)).

Belongs to the universal ribosomal protein uS3 family. As to quaternary structure, part of the 30S ribosomal subunit.

It is found in the plastid. It localises to the chloroplast. In Zygnema circumcarinatum (Green alga), this protein is Small ribosomal subunit protein uS3c (rps3).